The following is a 25-amino-acid chain: Grammistin Pp 3 (25 aa).

Belongs to the grammistin family. Group 3 subfamily. As to quaternary structure, exists as aggregates of 3-4 molecules. As to expression, expressed by the skin glands.

The protein resides in the secreted. Functionally, thanks to its abundant amphiphilic alpha-helices, it may integrate into membrane phospholipids, leading to lysis of the membrane. Has hemolytic activity. Has antibacterial activity with a broad spectrum against various species of bacteria including both Gram-positive and Gram-negative groups. Also has ichthyotoxic activity. The chain is Grammistin Pp 3 from Pogonoperca punctata (Clown grouper).